A 256-amino-acid chain; its full sequence is Imidazole glycerol phosphate synthase subunit HisF (256 aa).

Residues aspartate 12 and aspartate 131 contribute to the active site.

It belongs to the HisA/HisF family. As to quaternary structure, heterodimer of HisH and HisF.

It localises to the cytoplasm. The enzyme catalyses 5-[(5-phospho-1-deoxy-D-ribulos-1-ylimino)methylamino]-1-(5-phospho-beta-D-ribosyl)imidazole-4-carboxamide + L-glutamine = D-erythro-1-(imidazol-4-yl)glycerol 3-phosphate + 5-amino-1-(5-phospho-beta-D-ribosyl)imidazole-4-carboxamide + L-glutamate + H(+). Its pathway is amino-acid biosynthesis; L-histidine biosynthesis; L-histidine from 5-phospho-alpha-D-ribose 1-diphosphate: step 5/9. In terms of biological role, IGPS catalyzes the conversion of PRFAR and glutamine to IGP, AICAR and glutamate. The HisF subunit catalyzes the cyclization activity that produces IGP and AICAR from PRFAR using the ammonia provided by the HisH subunit. The protein is Imidazole glycerol phosphate synthase subunit HisF of Pseudomonas syringae pv. tomato (strain ATCC BAA-871 / DC3000).